The chain runs to 479 residues: Poly(A) polymerase catalytic subunit (479 aa).

Catalysis depends on residues Asp-202 and Asp-204. Residues Asp-202, Asp-204, and Asp-253 each contribute to the Ca(2+) site.

This sequence belongs to the poxviridae poly(A) polymerase catalytic subunit family. In terms of assembly, heterodimer of a large (catalytic) subunit and a small (regulatory) subunit.

The catalysed reaction is RNA(n) + ATP = RNA(n)-3'-adenine ribonucleotide + diphosphate. Functionally, polymerase that creates the 3'-poly(A) tail of mRNA's. The polypeptide is Poly(A) polymerase catalytic subunit (OPG063) (Bos taurus (Bovine)).